A 288-amino-acid polypeptide reads, in one-letter code: Polyisoprenoid diphosphate/phosphate phosphohydrolase PLPP6 (288 aa).

Positions 1-82 are disordered; the sequence is MPSPKARSGS…STGGGGQQLP (82 aa). Topologically, residues 1–127 are cytoplasmic; sequence MPSPKARSGS…EDSSWGSVRP (127 aa). A helical transmembrane segment spans residues 128 to 148; that stretch reads LMKLIEVSGHGIPWLAGAAYC. Topologically, residues 149-161 are lumenal; it reads LYKSDSPAGQEVM. A helical transmembrane segment spans residues 162-182; it reads LNLLMALVLDVVLVGVLKAVV. Positions 179–187 are phosphatase sequence motif I; sequence KAVVRRRRP. At 183-223 the chain is on the cytoplasmic side; it reads RRRRPAHNRMDMFATFSVDSYSFPSGHATRAAMCARFLLNH. Positions 206-209 are phosphatase sequence motif II; that stretch reads PSGH. The Proton donors role is filled by histidine 209. The helical transmembrane segment at 224-244 threads the bilayer; sequence LVLAAPLRVLVLLWATIVGFS. Residues 244-255 are phosphatase sequence motif III; the sequence is SRVLLGRHNVTD. The Lumenal portion of the chain corresponds to 245 to 255; that stretch reads RVLLGRHNVTD. The active-site Nucleophile is histidine 251. Residues 256–276 traverse the membrane as a helical segment; it reads VAFGFFMGYWQYNLVEMLWLS. Residues 277-288 are Cytoplasmic-facing; it reads PVMLQSAIGQLH.

The protein belongs to the PA-phosphatase related phosphoesterase family.

It localises to the endoplasmic reticulum membrane. The protein localises to the nucleus envelope. Its subcellular location is the nucleus inner membrane. The catalysed reaction is presqualene diphosphate + H2O = presqualene phosphate + phosphate + H(+). The enzyme catalyses presqualene phosphate + H2O = presqualene alcohol + phosphate. It catalyses the reaction (2E,6E)-farnesyl diphosphate + H2O = (2E,6E)-farnesyl phosphate + phosphate + H(+). It carries out the reaction (2E,6E)-farnesyl phosphate + H2O = (2E,6E)-farnesol + phosphate. The catalysed reaction is (2E,6E,10E)-geranylgeranyl diphosphate + H2O = (2E,6E,10E)-geranylgeranyl phosphate + phosphate + H(+). The enzyme catalyses (2E,6E,10E)-geranylgeranyl phosphate + H2O = (2E,6E,10E)-geranylgeraniol + phosphate. It catalyses the reaction (2E)-geranyl diphosphate + H2O = (2E)-geranyl phosphate + phosphate + H(+). It carries out the reaction (2E)-geranyl phosphate + H2O = (2E)-geraniol + phosphate. The catalysed reaction is 1,2-dihexadecanoyl-sn-glycero-3-phosphate + H2O = 1,2-dihexadecanoyl-sn-glycerol + phosphate. In terms of biological role, magnesium-independent polyisoprenoid diphosphatase that catalyzes the sequential dephosphorylation of presqualene, farnesyl, geranyl and geranylgeranyl diphosphates. May regulate the biosynthesis of cholesterol and related sterols by dephosphorylating presqualene and farnesyl diphosphate, two key intermediates in this biosynthetic pathway. May also play a role in protein prenylation by acting on farnesyl diphosphate and its derivative geranylgeranyl diphosphate, two precursors for the addition of isoprenoid anchors to membrane proteins. Has a lower activity towards phosphatidic acid (PA), but through phosphatidic acid dephosphorylation may participate in the biosynthesis of phospholipids and triacylglycerols. May also act on ceramide-1-P, lysophosphatidic acid (LPA) and sphing-4-enine 1-phosphate/sphingosine-1-phosphate. In Danio rerio (Zebrafish), this protein is Polyisoprenoid diphosphate/phosphate phosphohydrolase PLPP6 (plpp6).